Consider the following 478-residue polypeptide: Transcript termination protein A18 (478 aa).

A Helicase ATP-binding domain is found at 98–254 (KLSTHRPMYM…NDVVNVLKVS (157 aa)). 111-118 (LSCGFGKT) contributes to the ATP binding site. The short motif at 204 to 207 (DESH) is the DESH box element. The Helicase C-terminal domain maps to 302–454 (PRNNLIVDTV…IVSVSTDKLG (153 aa)). The tract at residues 456 to 478 (QQEGKEGTKEEPALTKAFSSQIR) is disordered. Residues 458–468 (EGKEGTKEEPA) show a composition bias toward basic and acidic residues.

Belongs to the helicase family. Poxviruses subfamily. Interacts with G2. Might be part of a transcription complex composed at least of G2, A18, and H5.

It is found in the virion. Its function is as follows. DNA helicase which seems to act as a postreplicative transcription termination factor. Involved in ATP-dependent release of nascent RNA. Forms a stable complex with single-stranded DNA, and to a lesser extent RNA. This chain is Transcript termination protein A18, found in Oryctolagus cuniculus (Rabbit).